A 511-amino-acid chain; its full sequence is Vesicular acetylcholine transporter (511 aa).

Topologically, residues 1-36 are cytoplasmic; that stretch reads MVVGQAKAAMGKISSAIGERSKRISGAMNEPLRKRK. The helical transmembrane segment at 37-57 threads the bilayer; it reads ILLVIVCIAMLLDNMLYMVIV. Residues 58-108 lie on the Lumenal, vesicle side of the membrane; that stretch reads PIVPNYLETIRTYKLVYITIPSNGTNGSLLNSTQRAVLERNPNANEDIQIG. Asn80, Asn83, and Asn88 each carry an N-linked (GlcNAc...) asparagine glycan. A helical transmembrane segment spans residues 109–129; the sequence is VLFASKAILQLLSNPFTGTFI. At 130–135 the chain is on the cytoplasmic side; it reads DRVGYD. Residues 136–156 traverse the membrane as a helical segment; it reads IPLLIGLTIMFFSTITFAFGE. Over 157–165 the chain is Lumenal, vesicle; the sequence is SYAILFAAR. Residues 166-186 form a helical membrane-spanning segment; sequence SLQGLGSAFADTSGIAMIADK. The Cytoplasmic portion of the chain corresponds to 187–197; sequence YTEESERTQAL. The helical transmembrane segment at 198–218 threads the bilayer; sequence GIALAFISFGSLVAPPFGGVL. The Lumenal, vesicle segment spans residues 219-225; the sequence is YQFAGKW. A helical membrane pass occupies residues 226-246; that stretch reads VPFLVLSFVCLLDGILLLMVV. The Cytoplasmic portion of the chain corresponds to 247–267; it reads TPFASRTRGNTLQGTPIHKLM. A helical transmembrane segment spans residues 268 to 288; sequence IDPYIAVVAGALTTCNIPLAF. Topologically, residues 289-306 are lumenal, vesicle; that stretch reads LEPTISNWMKKTMNASEW. Asn302 carries an N-linked (GlcNAc...) asparagine glycan. A helical membrane pass occupies residues 307–327; the sequence is QMGITWLPAFFPHILGVYITV. The Cytoplasmic portion of the chain corresponds to 328 to 337; it reads KLAAKYPNYQ. A helical transmembrane segment spans residues 338-358; the sequence is WLYGAFGLVIIGVSSCTIPAC. The Lumenal, vesicle segment spans residues 359-363; the sequence is RNFEE. The helical transmembrane segment at 364-384 threads the bilayer; it reads LIIPLCALCFGIALVDTALLP. At 385–400 the chain is on the cytoplasmic side; it reads TLAFLVDIRYVSVYGS. A helical membrane pass occupies residues 401 to 421; sequence VYAIADISYSVAYALGPIMAG. Residues 422 to 428 lie on the Lumenal, vesicle side of the membrane; it reads QIVHDLG. The chain crosses the membrane as a helical span at residues 429–449; sequence FVQLNLGMGLVNILYAPALLF. The Cytoplasmic segment spans residues 450–511; the sequence is LRNVCQMKPS…VLSDQEGYSE (62 aa). The tract at residues 486–511 is disordered; it reads AKEPHGTSSGNHSVHAVLSDQEGYSE.

This sequence belongs to the major facilitator superfamily. Vesicular transporter family. As to expression, high expression in the electric lobe of the brain.

Its subcellular location is the membrane. Functionally, involved in acetylcholine transport into synaptic vesicles. This is Vesicular acetylcholine transporter from Torpedo torpedo (Common torpedo).